The following is a 314-amino-acid chain: Lysophospholipase D GDPD1 (314 aa).

Residues methionine 1–serine 3 are Extracellular-facing. The chain crosses the membrane as a helical span at residues threonine 4–leucine 24. Topologically, residues lysine 25–aspartate 195 are cytoplasmic. The 270-residue stretch at serine 40 to leucine 309 folds into the GP-PDE domain. A divalent metal cation is bound by residues glutamate 72, aspartate 74, and histidine 87. The chain crosses the membrane as a helical span at residues isoleucine 196–leucine 216. Residues leucine 217 to alanine 314 are Extracellular-facing.

It belongs to the glycerophosphoryl diester phosphodiesterase family.

The protein localises to the cytoplasm. Its subcellular location is the membrane. It localises to the perinuclear region. It is found in the endoplasmic reticulum. It carries out the reaction a 1-O-alkyl-sn-glycero-3-phosphocholine + H2O = a 1-O-alkyl-sn-glycero-3-phosphate + choline + H(+). The enzyme catalyses 1-hexadecanoyl-sn-glycero-3-phosphocholine + H2O = 1-hexadecanoyl-sn-glycero-3-phosphate + choline + H(+). It catalyses the reaction 1-hexadecanoyl-sn-glycero-3-phosphoethanolamine + H2O = 1-hexadecanoyl-sn-glycero-3-phosphate + ethanolamine + H(+). The catalysed reaction is N-hexadecanoyl-sn-glycero-3-phosphoethanolamine + H2O = N-hexadecanoylethanolamine + sn-glycerol 3-phosphate + H(+). It carries out the reaction N-(5Z,8Z,11Z,14Z-eicosatetraenoyl)-1-(9Z-octadecenoyl)-sn-glycero-3-phosphoethanolamine + H2O = N-(5Z,8Z,11Z,14Z-eicosatetraenoyl)-ethanolamine + 1-(9Z-octadecenoyl)-sn-glycero-3-phosphate + H(+). The enzyme catalyses N,1-di-(9Z-octadecenoyl)-sn-glycero-3-phosphoethanolamine + H2O = N-(9Z-octadecenoyl) ethanolamine + 1-(9Z-octadecenoyl)-sn-glycero-3-phosphate + H(+). It catalyses the reaction N-hexadecanoyl-1-(9Z-octadecenoyl)-sn-glycero-3-phosphoethanolamine + H2O = N-hexadecanoylethanolamine + 1-(9Z-octadecenoyl)-sn-glycero-3-phosphate + H(+). The catalysed reaction is 1-O-hexadecyl-sn-glycero-3-phosphocholine + H2O = 1-O-hexadecyl-sn-glycero-3-phosphate + choline + H(+). It carries out the reaction 1-(9Z-octadecenoyl)-sn-glycero-3-phosphocholine + H2O = 1-(9Z-octadecenoyl)-sn-glycero-3-phosphate + choline + H(+). The enzyme catalyses N,1-dihexadecanoyl-sn-glycero-3-phosphoethanolamine + H2O = N-hexadecanoylethanolamine + 1-hexadecanoyl-sn-glycero-3-phosphate + H(+). It catalyses the reaction 1-O-(1Z-octadecenyl)-sn-glycero-3-phospho-(N-5Z,8Z,11Z,14Z-eicosatetraenoyl)-ethanolamine + H2O = 1-O-(1Z-octadecenyl)-sn-glycero-3-phosphate + N-(5Z,8Z,11Z,14Z-eicosatetraenoyl)-ethanolamine + H(+). The catalysed reaction is 1-O-(1Z-octadecenyl)-sn-glycero-3-phospho-(N-9Z-octadecenoyl)-ethanolamine + H2O = 1-O-(1Z-octadecenyl)-sn-glycero-3-phosphate + N-(9Z-octadecenoyl) ethanolamine + H(+). It carries out the reaction 1-O-(1Z-octadecenyl)-sn-glycero-3-phospho-N-hexadecanoyl-ethanolamine + H2O = 1-O-(1Z-octadecenyl)-sn-glycero-3-phosphate + N-hexadecanoylethanolamine + H(+). With respect to regulation, lysophospholipase D activity is increased by magnesium and manganese and inhibited by calcium in a concentration dependent manner. Loss of lysophospholipase D activity by addition of EDTA. In terms of biological role, hydrolyzes lysoglycerophospholipids to produce lysophosphatidic acid (LPA) and the corresponding amines. Shows a preference for 1-O-alkyl-sn-glycero-3-phosphocholine (lyso-PAF), lysophosphatidylethanolamine (lyso-PE) and lysophosphatidylcholine (lyso-PC). May be involved in bioactive N-acylethanolamine biosynthesis from both N-acyl-lysoplasmenylethanolamin (N-acyl-lysoPlsEt) and N-acyl-lysophosphatidylethanolamin (N-acyl-lysoPE). In addition, hydrolyzes glycerophospho-N-acylethanolamine to N-acylethanolamine. Does not display glycerophosphodiester phosphodiesterase activity, since it cannot hydrolyze either glycerophosphoinositol or glycerophosphocholine. The polypeptide is Lysophospholipase D GDPD1 (Rattus norvegicus (Rat)).